The primary structure comprises 313 residues: MARKLKAAIIGSGNIGTDLMIKILRHGQNIEMGAMVGIDPASDGLARAARMGVATTHEGVEGLTRLDVFKDIDFVFDATSAGAHVKNDAFLRTLKPGIRMIDLTPAAIGPYCIPVVNGEDHLDALNVNMVTCGGQATIPMVAAVSRVAKVHYGEIVASISSKSAGPGTRANIDEFTETTSKAIEVVGGAAKGKAIIVLNPAEPPLIMRDTVYTLSDFASEDAIAESVERMAADVQAYVPGYRLKQKVQFDRIEASHPINIPGVGPRMSGLKTSIFLEVEGAAHYLPAYAGNLDIMTSAGLRTAEHMATRMLAA.

Position 12 to 15 (12 to 15 (SGNI)) interacts with NAD(+). The active-site Acyl-thioester intermediate is the Cys132. Residues 163 to 171 (SAGPGTRAN) and Asn291 contribute to the NAD(+) site.

This sequence belongs to the acetaldehyde dehydrogenase family.

It carries out the reaction acetaldehyde + NAD(+) + CoA = acetyl-CoA + NADH + H(+). This chain is Acetaldehyde dehydrogenase (bphG), found in Burkholderia cepacia (Pseudomonas cepacia).